The following is a 690-amino-acid chain: DNA-directed RNA polymerase subunit beta' (690 aa).

Positions 76, 78, 94, and 97 each coordinate Zn(2+). Residues D496, D498, and D500 each coordinate Mg(2+).

Belongs to the RNA polymerase beta' chain family. RpoC1 subfamily. In plastids the minimal PEP RNA polymerase catalytic core is composed of four subunits: alpha, beta, beta', and beta''. When a (nuclear-encoded) sigma factor is associated with the core the holoenzyme is formed, which can initiate transcription. Requires Mg(2+) as cofactor. Zn(2+) is required as a cofactor.

The protein resides in the plastid. It localises to the chloroplast. It catalyses the reaction RNA(n) + a ribonucleoside 5'-triphosphate = RNA(n+1) + diphosphate. DNA-dependent RNA polymerase catalyzes the transcription of DNA into RNA using the four ribonucleoside triphosphates as substrates. The sequence is that of DNA-directed RNA polymerase subunit beta' from Lemna minor (Common duckweed).